The following is a 370-amino-acid chain: Chaperone protein DnaJ (370 aa).

Residues 4–68 (DYYQVLGVSK…QKRAAYDRFG (65 aa)) enclose the J domain. The CR-type zinc finger occupies 133 to 211 (GIEKNISFSS…CHGMGRYHKQ (79 aa)). Zn(2+) contacts are provided by cysteine 146, cysteine 149, cysteine 163, cysteine 166, cysteine 185, cysteine 188, cysteine 199, and cysteine 202. 4 CXXCXGXG motif repeats span residues 146–153 (CDTCHGTG), 163–170 (CDACGGVG), 185–192 (CHKCQGNG), and 199–206 (CKKCHGMG).

It belongs to the DnaJ family. Homodimer. The cofactor is Zn(2+).

It is found in the cytoplasm. In terms of biological role, participates actively in the response to hyperosmotic and heat shock by preventing the aggregation of stress-denatured proteins and by disaggregating proteins, also in an autonomous, DnaK-independent fashion. Unfolded proteins bind initially to DnaJ; upon interaction with the DnaJ-bound protein, DnaK hydrolyzes its bound ATP, resulting in the formation of a stable complex. GrpE releases ADP from DnaK; ATP binding to DnaK triggers the release of the substrate protein, thus completing the reaction cycle. Several rounds of ATP-dependent interactions between DnaJ, DnaK and GrpE are required for fully efficient folding. Also involved, together with DnaK and GrpE, in the DNA replication of plasmids through activation of initiation proteins. This Rickettsia prowazekii (strain Madrid E) protein is Chaperone protein DnaJ.